Consider the following 291-residue polypeptide: Elongation factor Ts (291 aa).

The tract at residues 80–83 is involved in Mg(2+) ion dislocation from EF-Tu; it reads TDFV.

It belongs to the EF-Ts family.

The protein resides in the cytoplasm. In terms of biological role, associates with the EF-Tu.GDP complex and induces the exchange of GDP to GTP. It remains bound to the aminoacyl-tRNA.EF-Tu.GTP complex up to the GTP hydrolysis stage on the ribosome. This chain is Elongation factor Ts, found in Acinetobacter baylyi (strain ATCC 33305 / BD413 / ADP1).